We begin with the raw amino-acid sequence, 506 residues long: Maturase K (506 aa).

This sequence belongs to the intron maturase 2 family. MatK subfamily.

Its subcellular location is the plastid. The protein resides in the chloroplast. Its function is as follows. Usually encoded in the trnK tRNA gene intron. Probably assists in splicing its own and other chloroplast group II introns. This chain is Maturase K, found in Trifolium repens (Creeping white clover).